Reading from the N-terminus, the 312-residue chain is HPr kinase/phosphorylase (312 aa).

Active-site residues include H139 and K160. An ATP-binding site is contributed by 154-161 (GSSGVGKS). S161 contacts Mg(2+). The Proton acceptor; for phosphorylation activity. Proton donor; for dephosphorylation activity role is filled by D178. Residues 202–211 (LEIRGLGIIN) are important for the catalytic mechanism of both phosphorylation and dephosphorylation. E203 lines the Mg(2+) pocket. Residue R244 is part of the active site. Positions 265 to 270 (PVRPGR) are important for the catalytic mechanism of dephosphorylation.

This sequence belongs to the HPrK/P family. In terms of assembly, homohexamer. The cofactor is Mg(2+).

The catalysed reaction is [HPr protein]-L-serine + ATP = [HPr protein]-O-phospho-L-serine + ADP + H(+). It carries out the reaction [HPr protein]-O-phospho-L-serine + phosphate + H(+) = [HPr protein]-L-serine + diphosphate. In terms of biological role, catalyzes the ATP- as well as the pyrophosphate-dependent phosphorylation of a specific serine residue in HPr, a phosphocarrier protein of the phosphoenolpyruvate-dependent sugar phosphotransferase system (PTS). HprK/P also catalyzes the pyrophosphate-producing, inorganic phosphate-dependent dephosphorylation (phosphorolysis) of seryl-phosphorylated HPr (P-Ser-HPr). The two antagonistic activities of HprK/P are regulated by several intracellular metabolites, which change their concentration in response to the absence or presence of rapidly metabolisable carbon sources (glucose, fructose, etc.) in the growth medium. Therefore, by controlling the phosphorylation state of HPr, HPrK/P is a sensor enzyme that plays a major role in the regulation of carbon metabolism and sugar transport: it mediates carbon catabolite repression (CCR), and regulates PTS-catalyzed carbohydrate uptake and inducer exclusion. The protein is HPr kinase/phosphorylase of Listeria welshimeri serovar 6b (strain ATCC 35897 / DSM 20650 / CCUG 15529 / CIP 8149 / NCTC 11857 / SLCC 5334 / V8).